The chain runs to 251 residues: MTEAQRHQILLEMLAQLGFVTVEKVVERLGISPATARRDINKLGESGKLKKVRNGAEAITQQRPRWTPMNLHQAQNHDEKVRIAKAASQLVNPGESVVINCGSTAFLLGREMCGKPVQIITNYLPLANYLIDQEHDSVIIMGGQYNKSQSITLSPQGSENSLYAGHWMFTSGKGLTAEGLYKTDMLTAMAEQKMLSVVGKLVVLVDSSKIGERAGMLFSRADQIDMLITGKNANPEILQQLEAQGVSILRV.

An HTH deoR-type domain is found at 3–58; the sequence is EAQRHQILLEMLAQLGFVTVEKVVERLGISPATARRDINKLGESGKLKKVRNGAEA. The segment at residues 20–39 is a DNA-binding region (H-T-H motif); sequence VTVEKVVERLGISPATARRD.

The protein localises to the cytoplasm. In terms of biological role, represses ulaG and the ulaABCDEF operon. This chain is HTH-type transcriptional regulator UlaR, found in Shigella flexneri.